A 226-amino-acid chain; its full sequence is DELTA-thalatoxin-Avl1b (226 aa).

The first 21 residues, 1–21, serve as a signal peptide directing secretion; that stretch reads MRHFVVFLYMFLALSIPTAFA. Residues 22 to 45 constitute a propeptide that is removed on maturation; the sequence is KKHIVTKKGNHQDITNDNEGENAE. Residues 50 to 59 form a plays an important role in the hemolytic activity region; the sequence is AVAGAVIAGG. An N-terminal region region spans residues 58–77; that stretch reads GGELALKILTKILDEIGKID. Ser101, Val134, Ser152, Pro154, Tyr180, and Tyr184 together coordinate phosphocholine. The interval 152–167 is trp-rich region, which is important for the binding to lipid membrane; it reads SVPFDYNLYTNWWNVK. Positions 191–193 match the Cell attachment site, crucial for protein stability motif; the sequence is KPS.

Belongs to the actinoporin family. Sea anemone subfamily. Octamer or nonamer in membranes. Monomer in the soluble state.

The protein localises to the secreted. It localises to the nematocyst. Its subcellular location is the target cell membrane. In terms of biological role, pore-forming protein that forms cations-selective hydrophilic pores of around 1 nm and causes cytolysis. Pore formation is a multi-step process that involves specific recognition of membrane sphingomyelin (but neither cholesterol nor phosphatidylcholine) using aromatic rich region and adjacent phosphocholine (POC) binding site, firm binding to the membrane (mainly driven by hydrophobic interactions) accompanied by the transfer of the N-terminal region to the lipid-water interface and finally pore formation after oligomerization of monomers. This chain is DELTA-thalatoxin-Avl1b, found in Actineria villosa (Okinawan sea anemone).